The following is a 157-amino-acid chain: Cysteine protease Nivulian-2 (157 aa).

The protein belongs to the intron maturase 2 family. MatK subfamily. As to quaternary structure, monomer. In terms of processing, glycosylated. In terms of tissue distribution, accumulates in latex (at protein level).

Its activity is regulated as follows. Inhibited by HgCl(2), iodoacetamide (IAA) and, to a far lesser extent, by SDS, hydrogen peroxide H(1)O(2), KCl, NaCl, ZnCl(2), AgSO(4), CdCl(2), FeCl(3), PMSF, Pepstatin A and EDTA. Repressed moderately by many organic solvents such as diethyl ether, ethy lacetate, acetophenone, butanol, trichloroethylene, tetrahydrofuran, methanol, chloroform and dichloromethane, and, to a lesser extent, by propanol, benzyl alcohol and chlorobenzene. Cysteine protease inducing milk clotting by cleaving casein. Exhibits biomedical activities such as wound healing, haemostatic and antibacterial activity, as well as agricultural application in biocontrol process against the infectious management of the root knot nematode Meloidogyne incognita. The protein is Cysteine protease Nivulian-2 of Euphorbia nivulia (Leafy milk hedge).